The following is a 194-amino-acid chain: Thymidylate kinase (194 aa).

Gly7 to Ser14 contributes to the ATP binding site.

This sequence belongs to the thymidylate kinase family.

The catalysed reaction is dTMP + ATP = dTDP + ADP. Its function is as follows. Phosphorylation of dTMP to form dTDP in both de novo and salvage pathways of dTTP synthesis. In Campylobacter lari (strain RM2100 / D67 / ATCC BAA-1060), this protein is Thymidylate kinase.